The sequence spans 205 residues: High frequency lysogenization protein HflD homolog (205 aa).

The protein belongs to the HflD family.

It localises to the cytoplasm. The protein resides in the cell inner membrane. This is High frequency lysogenization protein HflD homolog from Photobacterium profundum (strain SS9).